Consider the following 60-residue polypeptide: Putative mercuric resistance protein (60 aa).

The protein is Putative mercuric resistance protein of Pseudomonas aeruginosa.